The chain runs to 84 residues: uncharacterized protein (84 aa).

A helical transmembrane segment spans residues 13 to 35; the sequence is TTLVLTIISTTTTTLFAIIQLYL. Residues 41 to 84 are a coiled coil; it reads LKDAVKEIVNSELSNLKTEIEELKIKQDELSRQVEEIKRKLDQK.

The protein localises to the host membrane. This is an uncharacterized protein from Sulfolobus islandicus rod-shaped virus 1 (SIRV-1).